The chain runs to 300 residues: Ribosomal RNA small subunit methyltransferase H (300 aa).

S-adenosyl-L-methionine contacts are provided by residues 38–40 (GGH), glutamate 55, isoleucine 85, aspartate 102, and histidine 109.

It belongs to the methyltransferase superfamily. RsmH family.

It is found in the cytoplasm. It catalyses the reaction cytidine(1402) in 16S rRNA + S-adenosyl-L-methionine = N(4)-methylcytidine(1402) in 16S rRNA + S-adenosyl-L-homocysteine + H(+). Its function is as follows. Specifically methylates the N4 position of cytidine in position 1402 (C1402) of 16S rRNA. In Brachyspira hyodysenteriae (strain ATCC 49526 / WA1), this protein is Ribosomal RNA small subunit methyltransferase H.